We begin with the raw amino-acid sequence, 178 residues long: Ribonuclease M5 (178 aa).

The region spanning 10-103 is the Toprim domain; sequence DGVIVCEGKT…NSTKIGVAEA (94 aa). The Mg(2+) site is built by E16, D62, and D64.

This sequence belongs to the ribonuclease M5 family. It depends on Mg(2+) as a cofactor.

The protein resides in the cytoplasm. The catalysed reaction is Endonucleolytic cleavage of RNA, removing 21 and 42 nucleotides, respectively, from the 5'- and 3'-termini of a 5S-rRNA precursor.. Functionally, required for correct processing of both the 5' and 3' ends of 5S rRNA precursor. Cleaves both sides of a double-stranded region yielding mature 5S rRNA in one step. This is Ribonuclease M5 from Mycoplasma pneumoniae (strain ATCC 29342 / M129 / Subtype 1) (Mycoplasmoides pneumoniae).